A 344-amino-acid polypeptide reads, in one-letter code: MMVIRPVERSDVSALMQLASKTGDGLTSLPANEATLSARIERAIKTWQGELPKSEQGYVFVLEDSETGTVPGICAIEVAVGLNDPWYNYRVGTLVHASKELNVYNALPTLFLSNDHTGSSELCTLFLDPDWRKEGNGYLLSKSRFMFMAAFRDKFNDKVVAEMRGVIDEHGYSPFWQSLGKRFFSMDFSRADFLCGTGQKAFIAELMPKHPIYTHFLSQEAQDVIGQVHPQTAPARAVLEKEGFRYRNYIDIFDGGPTLECDIDRVRAIRKSRLVEVAEGQPAQGDFPACLVANENYHHFRVVLARTDPATERLILTAAQLDALKCHAGDRVRLVRLCAEEKTA.

A succinyl-CoA-binding site is contributed by L125. The active-site Proton donor is H229.

This sequence belongs to the arginine N-succinyltransferase family.

The enzyme catalyses succinyl-CoA + L-arginine = N(2)-succinyl-L-arginine + CoA + H(+). It functions in the pathway amino-acid degradation; L-arginine degradation via AST pathway; L-glutamate and succinate from L-arginine: step 1/5. Functionally, catalyzes the transfer of succinyl-CoA to arginine to produce N(2)-succinylarginine. In Shigella flexneri serotype 5b (strain 8401), this protein is Arginine N-succinyltransferase.